A 345-amino-acid chain; its full sequence is Heat-inducible transcription repressor HrcA (345 aa).

It belongs to the HrcA family.

In terms of biological role, negative regulator of class I heat shock genes (grpE-dnaK-dnaJ and groELS operons). Prevents heat-shock induction of these operons. This Listeria welshimeri serovar 6b (strain ATCC 35897 / DSM 20650 / CCUG 15529 / CIP 8149 / NCTC 11857 / SLCC 5334 / V8) protein is Heat-inducible transcription repressor HrcA.